The primary structure comprises 1604 residues: Ubiquitin carboxyl-terminal hydrolase 32 (1604 aa).

EF-hand domains are found at residues 91 to 126 (KDEEKAKYIFSLFSSESGNYVIREEMERMLHVVDGK), 228 to 263 (IRPSLSEGLFNAFDENRDNHIDFKEISCGLSACCRG), and 264 to 299 (PLAERQKFCFKVFDVDRDGVLSRVELRDMVVALLEV). Residues Asp241, Asn243, Asp245, His247, Glu252, Asp277, Asp279, Asp281, and Glu288 each coordinate Ca(2+). In terms of domain architecture, DUSP spans 369–585 (ATPEEEGQII…ANLALPRPVI (217 aa)). In terms of domain architecture, USP spans 734–1567 (TGLSNLGNTC…SAYILFYEQQ (834 aa)). Cys743 acts as the Nucleophile in catalysis. At Tyr1173 the chain carries Phosphotyrosine. 2 disordered regions span residues 1343 to 1362 (KKVDAQSSAGEEDVLLSKSP) and 1367 to 1431 (ANII…DASK). A phosphoserine mark is found at Ser1350, Ser1372, Ser1376, and Ser1454. Residues 1367–1399 (ANIISSPKGSPSSSRKSGTSCPSSKNSSPNSSP) are compositionally biased toward low complexity. The Proton acceptor role is filled by His1526. Ser1588 is modified (phosphoserine). The residue at position 1601 (Cys1601) is a Cysteine methyl ester. Cys1601 carries the S-farnesyl cysteine lipid modification. The propeptide at 1602-1604 (VLQ) is removed in mature form.

This sequence belongs to the peptidase C19 family.

The protein localises to the golgi apparatus membrane. It carries out the reaction Thiol-dependent hydrolysis of ester, thioester, amide, peptide and isopeptide bonds formed by the C-terminal Gly of ubiquitin (a 76-residue protein attached to proteins as an intracellular targeting signal).. Functionally, deubiquitinase that can remove conjugated ubiquitin from target proteins, such as RAB7A and LAMTOR1. Acts as a positive regulator of the mTORC1 signaling by mediating deubiquitination of LAMTOR1, thereby promoting the association between LAMTOR1 and the lysosomal V-ATPase complex and subsequent activation of the mTORC1 complex. The chain is Ubiquitin carboxyl-terminal hydrolase 32 (USP32) from Homo sapiens (Human).